The chain runs to 297 residues: MLSSARARLPISLCSFSLPFARLPNTLSRYQETWQRLPGRTHPTRSIRTTPAYEGHIPLNWFENAVLAVGSAFMSLADPRRGDMVAALGETTAGPTLPSLRDRMLDSIEGRRVLMQRPRVNSSTIDLNKLAHYPEGTFGRAYVTWLERCGVTPDTREPVHYIDDPELAYVMQRYRECHDFYHCICNLPVNVESELALKYFEFANLGLPMTLLSALVGPVRLTPQKRQRLFAEFVPWALKCGGSSRSLITVYWEERWGQNVADMKTEFGIWDPPEARWSKPLSEAKAAAERHRTAQTH.

The transit peptide at 1–54 directs the protein to the mitochondrion; it reads MLSSARARLPISLCSFSLPFARLPNTLSRYQETWQRLPGRTHPTRSIRTTPAYE. Histidine 178, aspartate 179, histidine 182, and glutamate 194 together coordinate Zn(2+).

Belongs to the COQ4 family. As to quaternary structure, component of a multi-subunit COQ enzyme complex, composed of at least COQ3, COQ4, COQ5, COQ6, COQ7 and COQ9. Zn(2+) is required as a cofactor.

It localises to the mitochondrion inner membrane. The catalysed reaction is a 4-hydroxy-3-methoxy-5-(all-trans-polyprenyl)benzoate + H(+) = a 2-methoxy-6-(all-trans-polyprenyl)phenol + CO2. It participates in cofactor biosynthesis; ubiquinone biosynthesis. Functionally, lyase that catalyzes the C1-decarboxylation of 4-hydroxy-3-methoxy-5-(all-trans-polyprenyl)benzoic acid into 2-methoxy-6-(all-trans-polyprenyl)phenol during ubiquinone biosynthesis. The polypeptide is Ubiquinone biosynthesis protein COQ4, mitochondrial (Laccaria bicolor (strain S238N-H82 / ATCC MYA-4686) (Bicoloured deceiver)).